The sequence spans 114 residues: uncharacterized protein (114 aa).

A disordered region spans residues 1-24 (MFGACYKQPLKPSGSEPPAEECRM).

Expressed in kidney and liver.

This is an uncharacterized protein from Homo sapiens (Human).